Here is a 401-residue protein sequence, read N- to C-terminus: MTVRETRFPSSSATATQPDAVVRFCDTTLRDGEQAPGVAFTAAEKLAIAGALDAIGVHQIEAGIPGMGVTERDVLREILATDPKAEIVGWCRADHRDVEAAASCGLVTAHLTIPVSDLHLKSKLERDRAWARRRVRDCVVDGTDRGMRVSVGFEDASRADDAFVTDLAGELRDVGVTRLRWADTVGLLDPVSAYDRLGRLVRAVPGPWEIHAHDDFGLATANTIAAVQAGFTWVSTTVLGLGERAGNAPIEEVAMALRHLLKLPIDLDTTSFRTLAQLVVGWPLPAGKKAVVGESVFAHESGIHVHGILRHPATYEPFDPEVGGRRRLTVGKHSGRASLRHALEQCGITAEESELEPLVEQVRLAATRHKRGLDSRDLPGTSRAGRDAGPRAGTPTREEPV.

One can recognise a Pyruvate carboxyltransferase domain in the interval 22–271 (VRFCDTTLRD…KLPIDLDTTS (250 aa)). A disordered region spans residues 367–401 (TRHKRGLDSRDLPGTSRAGRDAGPRAGTPTREEPV).

This sequence belongs to the alpha-IPM synthase/homocitrate synthase family.

The enzyme catalyses acetyl-CoA + 2-oxoglutarate + H2O = (2R)-homocitrate + CoA + H(+). In terms of biological role, this protein is a Fe-Mo-cofactor biosynthetic component. The polypeptide is Homocitrate synthase (nifV) (Frankia sp. (strain FaC1)).